Here is a 347-residue protein sequence, read N- to C-terminus: Probable arabinogalactan endo-beta-1,4-galactanase A (347 aa).

The signal sequence occupies residues 1 to 16; it reads MLFSYLLATLPLLANA. Glu-150 (proton donor) is an active-site residue. Catalysis depends on Glu-260, which acts as the Nucleophile.

Belongs to the glycosyl hydrolase 53 family.

Its subcellular location is the secreted. It catalyses the reaction The enzyme specifically hydrolyzes (1-&gt;4)-beta-D-galactosidic linkages in type I arabinogalactans.. Its function is as follows. Endogalactanase involved in the degradation of plant cell wall polysaccharides, and more particularly of hairy regions of pectin. This Aspergillus flavus (strain ATCC 200026 / FGSC A1120 / IAM 13836 / NRRL 3357 / JCM 12722 / SRRC 167) protein is Probable arabinogalactan endo-beta-1,4-galactanase A (galA).